We begin with the raw amino-acid sequence, 346 residues long: Glucose-6-phosphatase 3 (346 aa).

Residues 1 to 24 are Lumenal-facing; that stretch reads MESTLGAGIAMAEALQNQLPWLEN. Residues 25–45 form a helical membrane-spanning segment; it reads VWLWVTFLGDPKSLFLFYFPA. Residues 46–54 lie on the Cytoplasmic side of the membrane; sequence AYYASRRVG. A helical transmembrane segment spans residues 55–75; sequence IAVLWISLITEWLNLVFKWFL. At 76-108 the chain is on the lumenal side; the sequence is FGDRPFWWVHESGYYSQAPAQVHQFPSSCETGP. Substrate is bound at residue Arg79. The helical transmembrane segment at 109–129 threads the bilayer; it reads GSPSGHCMITGAALWPIMTAV. The Proton donor role is filled by His114. At 130 to 140 the chain is on the cytoplasmic side; the sequence is SSQMATRAHSR. Residues 141–162 form a helical membrane-spanning segment; sequence WVRVIPSLAYCTFLLAVGLSRV. Arg161 contacts substrate. The Lumenal segment spans residues 163–167; the sequence is FLLAH. His167 functions as the Nucleophile in the catalytic mechanism. The chain crosses the membrane as a helical span at residues 168–186; sequence FPHQVLAGLITGAVLGWLM. At 187–197 the chain is on the cytoplasmic side; it reads TPQVPMERELS. Residues 198-218 form a helical membrane-spanning segment; it reads FYGLTSLALLLGASLIYWTLF. The Lumenal portion of the chain corresponds to 219-254; that stretch reads TLGLDLSWSINLASKWCERPEWVHLDSRPFASLSRD. The chain crosses the membrane as a helical span at residues 255-273; sequence SGAALGLGIALHSPCYAQV. Topologically, residues 274–283 are cytoplasmic; that stretch reads RRAHLGYGQK. The helical transmembrane segment at 284-304 threads the bilayer; the sequence is LVCLVLAMGLLGPLNWLGYPP. Residues 305 to 307 lie on the Lumenal side of the membrane; that stretch reads QIS. A helical membrane pass occupies residues 308 to 328; that stretch reads LFYIFNFLKYTLWPCLVLALV. The Cytoplasmic segment spans residues 329 to 346; sequence PWLVHMFSAQEAPPIRSS.

This sequence belongs to the glucose-6-phosphatase family.

It is found in the endoplasmic reticulum membrane. It carries out the reaction D-glucose 6-phosphate + H2O = D-glucose + phosphate. It participates in carbohydrate biosynthesis; gluconeogenesis. Inhibited by vanadate. Functionally, hydrolyzes glucose-6-phosphate to glucose in the endoplasmic reticulum. May form with the glucose-6-phosphate transporter (SLC37A4/G6PT) a ubiquitously expressed complex responsible for glucose production through glycogenolysis and gluconeogenesis. Probably required for normal neutrophil function. This chain is Glucose-6-phosphatase 3 (G6PC3), found in Bos taurus (Bovine).